A 303-amino-acid chain; its full sequence is tRNA-cytidine(32) 2-sulfurtransferase (303 aa).

The PP-loop motif motif lies at 45–50; the sequence is SGGKDS. Residues Cys-120, Cys-123, and Cys-211 each coordinate [4Fe-4S] cluster.

Belongs to the TtcA family. As to quaternary structure, homodimer. Mg(2+) serves as cofactor. [4Fe-4S] cluster is required as a cofactor.

The protein resides in the cytoplasm. The catalysed reaction is cytidine(32) in tRNA + S-sulfanyl-L-cysteinyl-[cysteine desulfurase] + AH2 + ATP = 2-thiocytidine(32) in tRNA + L-cysteinyl-[cysteine desulfurase] + A + AMP + diphosphate + H(+). The protein operates within tRNA modification. Its function is as follows. Catalyzes the ATP-dependent 2-thiolation of cytidine in position 32 of tRNA, to form 2-thiocytidine (s(2)C32). The sulfur atoms are provided by the cysteine/cysteine desulfurase (IscS) system. In Methylobacillus flagellatus (strain ATCC 51484 / DSM 6875 / VKM B-1610 / KT), this protein is tRNA-cytidine(32) 2-sulfurtransferase.